The sequence spans 324 residues: tRNA-modifying protein YgfZ (324 aa).

Trp-184 is a folate binding site.

This sequence belongs to the tRNA-modifying YgfZ family.

It is found in the cytoplasm. Its function is as follows. Folate-binding protein involved in regulating the level of ATP-DnaA and in the modification of some tRNAs. It is probably a key factor in regulatory networks that act via tRNA modification, such as initiation of chromosomal replication. This chain is tRNA-modifying protein YgfZ, found in Vibrio vulnificus (strain CMCP6).